The primary structure comprises 189 residues: MKVITLTGYKAHELGIFSHNHRGITYIKKAFEQQILALIEEGVEWFLISGQLGVELWAAEVVIKLKQTHPHIQLAVLTPFLEQESQWQEASRKKYHDILEAADFVDSITKRPYEGPAQLRLKNEYLVQKSDGLLVLYDEDKPGSPSYYLEVAKKRQQQEPYDIRLITPHDLEWIAQEDEMNDSVDIDNL.

The protein belongs to the UPF0398 family.

The protein is UPF0398 protein BH1768 of Halalkalibacterium halodurans (strain ATCC BAA-125 / DSM 18197 / FERM 7344 / JCM 9153 / C-125) (Bacillus halodurans).